The following is a 180-amino-acid chain: Adenine phosphoribosyltransferase (180 aa).

At serine 2 the chain carries N-acetylserine. Residues serine 4, serine 15, and serine 30 each carry the phosphoserine modification. The residue at position 60 (tyrosine 60) is a Phosphotyrosine. A Phosphoserine modification is found at serine 66. The residue at position 114 (lysine 114) is an N6-acetyllysine. Residue threonine 135 is modified to Phosphothreonine.

It belongs to the purine/pyrimidine phosphoribosyltransferase family. In terms of assembly, homodimer.

The protein resides in the cytoplasm. It catalyses the reaction AMP + diphosphate = 5-phospho-alpha-D-ribose 1-diphosphate + adenine. It functions in the pathway purine metabolism; AMP biosynthesis via salvage pathway; AMP from adenine: step 1/1. Functionally, catalyzes a salvage reaction resulting in the formation of AMP, that is energically less costly than de novo synthesis. This Rattus norvegicus (Rat) protein is Adenine phosphoribosyltransferase.